Reading from the N-terminus, the 455-residue chain is Argininosuccinate lyase (455 aa).

This sequence belongs to the lyase 1 family. Argininosuccinate lyase subfamily.

Its subcellular location is the cytoplasm. It carries out the reaction 2-(N(omega)-L-arginino)succinate = fumarate + L-arginine. It participates in amino-acid biosynthesis; L-arginine biosynthesis; L-arginine from L-ornithine and carbamoyl phosphate: step 3/3. The protein is Argininosuccinate lyase of Roseiflexus sp. (strain RS-1).